The chain runs to 307 residues: UPF0282 protein PH1002 (307 aa).

It belongs to the UPF0282 family.

This is UPF0282 protein PH1002 from Pyrococcus horikoshii (strain ATCC 700860 / DSM 12428 / JCM 9974 / NBRC 100139 / OT-3).